The chain runs to 27 residues: MVGRYRFEFILIILILCALITARFYLS.

This is an uncharacterized protein from Escherichia coli (strain K12).